The sequence spans 777 residues: Endonuclease MutS2 (777 aa).

Residue 328–335 (GPNTGGKT) coordinates ATP. In terms of domain architecture, Smr spans 702–777 (LDIRGMNTLE…GDGATEVYLK (76 aa)).

Belongs to the DNA mismatch repair MutS family. MutS2 subfamily. As to quaternary structure, homodimer. Binds to stalled ribosomes, contacting rRNA.

In terms of biological role, endonuclease that is involved in the suppression of homologous recombination and thus may have a key role in the control of bacterial genetic diversity. Functionally, acts as a ribosome collision sensor, splitting the ribosome into its 2 subunits. Detects stalled/collided 70S ribosomes which it binds and splits by an ATP-hydrolysis driven conformational change. Acts upstream of the ribosome quality control system (RQC), a ribosome-associated complex that mediates the extraction of incompletely synthesized nascent chains from stalled ribosomes and their subsequent degradation. Probably generates substrates for RQC. The chain is Endonuclease MutS2 from Carboxydothermus hydrogenoformans (strain ATCC BAA-161 / DSM 6008 / Z-2901).